The primary structure comprises 402 residues: Tol-Pal system protein TolB (402 aa).

Residues 1–17 form the signal peptide; sequence MKKIVAIFLVFLGSLWA.

This sequence belongs to the TolB family. The Tol-Pal system is composed of five core proteins: the inner membrane proteins TolA, TolQ and TolR, the periplasmic protein TolB and the outer membrane protein Pal. They form a network linking the inner and outer membranes and the peptidoglycan layer.

The protein resides in the periplasm. Its function is as follows. Part of the Tol-Pal system, which plays a role in outer membrane invagination during cell division and is important for maintaining outer membrane integrity. The chain is Tol-Pal system protein TolB from Campylobacter jejuni (strain RM1221).